The primary structure comprises 314 residues: Large ribosomal subunit protein uL10 (314 aa).

The tract at residues 285–314 (GAAAGGAAAEEEKEEEEESDEEGGFGDLFG) is disordered. Residues 293 to 308 (AEEEKEEEEESDEEGG) are compositionally biased toward acidic residues. A Phosphoserine; by CK1 modification is found at Ser-303.

This sequence belongs to the universal ribosomal protein uL10 family. Component of the large ribosomal subunit. P0 forms a pentameric complex by interaction with dimers of P1 and P2. Phosphorylated.

Its function is as follows. Ribosomal protein P0 is the functional equivalent of E.coli protein L10. This Podospora anserina (Pleurage anserina) protein is Large ribosomal subunit protein uL10.